The primary structure comprises 45 residues: Thymosin beta (45 aa).

Residues 1–45 form a disordered region; the sequence is MADKPNMTEITSFDKTKLRKTETQEKNPLPTKETIEQERQGESTP. Basic and acidic residues-rich tracts occupy residues 12 to 25 and 33 to 45; these read SFDK…ETQE and ETIE…ESTP.

The protein belongs to the thymosin beta family.

The protein localises to the cytoplasm. The protein resides in the cytoskeleton. Plays an important role in the organization of the cytoskeleton. Binds to and sequesters actin monomers (G actin) and therefore inhibits actin polymerization. This Danio rerio (Zebrafish) protein is Thymosin beta (tmsb).